A 555-amino-acid polypeptide reads, in one-letter code: Suppressor of tumorigenicity 7 protein-like (555 aa).

A run of 2 helical transmembrane segments spans residues 36–56 (GLAG…LYAL) and 80–100 (FYVA…IFEW). The tract at residues 126–148 (TESSISEPGSPSNNRESETSRQN) is disordered.

It belongs to the ST7 family.

The protein resides in the membrane. This chain is Suppressor of tumorigenicity 7 protein-like (ST7L), found in Bos taurus (Bovine).